Reading from the N-terminus, the 391-residue chain is Transcription factor TCP3 (391 aa).

Residues 1-34 (MAPDNDHFLDSPSPPLLEMRHHQSATENGGGCGE) form a disordered region. Residues 49 to 107 (RKDRHSKVCTAKGPRDRRVRLSAPTAIQFYDVQDRLGFDRPSKAVDWLITKAKSAIDDL) form the TCP domain. 3 disordered regions span residues 122 to 168 (HAAA…PASM), 317 to 345 (HHHHHHHQQSMTTDDLHHHHPYHIPPGIH), and 363 to 391 (FRIPARFQGEQEEHGGDNKPSSASSDSRH). Positions 381–391 (KPSSASSDSRH) are enriched in polar residues.

Interacts with SPL. Interacts with KIN10; KIN11 and FLZ3. In terms of tissue distribution, expressed in cotyledons, particularly in the vascular region, in leaves, roots, buds, flowers and immature siliques.

The protein resides in the nucleus. In terms of biological role, plays a pivotal role in the control of morphogenesis of shoot organs by negatively regulating the expression of boundary-specific genes such as CUC genes, probably through the induction of miRNA (e.g. miR164). Participates in ovule development. The polypeptide is Transcription factor TCP3 (TCP3) (Arabidopsis thaliana (Mouse-ear cress)).